A 100-amino-acid polypeptide reads, in one-letter code: NADH-quinone oxidoreductase subunit K (100 aa).

Transmembrane regions (helical) follow at residues 4 to 24, 28 to 48, and 60 to 80; these read LQHGLILAAILFVLGLTGLLI, LLFMLISLEVMINAAALAFVV, and VMYILAITLAAAEASIGLALL.

It belongs to the complex I subunit 4L family. In terms of assembly, NDH-1 is composed of 13 different subunits. Subunits NuoA, H, J, K, L, M, N constitute the membrane sector of the complex.

It is found in the cell inner membrane. It catalyses the reaction a quinone + NADH + 5 H(+)(in) = a quinol + NAD(+) + 4 H(+)(out). Its function is as follows. NDH-1 shuttles electrons from NADH, via FMN and iron-sulfur (Fe-S) centers, to quinones in the respiratory chain. The immediate electron acceptor for the enzyme in this species is believed to be ubiquinone. Couples the redox reaction to proton translocation (for every two electrons transferred, four hydrogen ions are translocated across the cytoplasmic membrane), and thus conserves the redox energy in a proton gradient. The polypeptide is NADH-quinone oxidoreductase subunit K (Yersinia pseudotuberculosis serotype O:1b (strain IP 31758)).